The primary structure comprises 187 residues: UPF0301 protein PC1_3712 (187 aa).

The protein belongs to the UPF0301 (AlgH) family.

This Pectobacterium carotovorum subsp. carotovorum (strain PC1) protein is UPF0301 protein PC1_3712.